The sequence spans 22 residues: Unknown protein 20 from 2D-PAGE (22 aa).

The protein is Unknown protein 20 from 2D-PAGE of Bombyx mori (Silk moth).